We begin with the raw amino-acid sequence, 812 residues long: DNA replication licensing factor MCM3 (812 aa).

An N-acetylalanine modification is found at alanine 2. Serine 160 carries the phosphoserine modification. N6-acetyllysine is present on lysine 293. An MCM domain is found at valine 295–leucine 502. ADP is bound by residues glutamine 353, leucine 393, glutamate 394, alanine 395, and alanine 397. Residues serine 477–aspartate 480 carry the Arginine finger motif. Lysine 547 carries the post-translational modification N6-acetyllysine. The residue at position 611 (serine 611) is a Phosphoserine. Arginine 664 serves as a coordination point for ATP. The interval arginine 664–serine 744 is disordered. Phosphoserine occurs at positions 668, 672, and 681. Over residues aspartate 670–serine 681 the composition is skewed to acidic residues. Phosphotyrosine is present on tyrosine 705. Serine 708 bears the Phosphoserine mark. Phosphothreonine is present on residues threonine 719, threonine 722, and threonine 729. Basic and acidic residues predominate over residues proline 720–serine 744. Residues serine 732 and serine 738 each carry the phosphoserine modification.

It belongs to the MCM family. In terms of assembly, component of the MCM2-7 complex. The complex forms a toroidal hexameric ring with the proposed subunit order MCM2-MCM6-MCM4-MCM7-MCM3-MCM5. Component of the CMG helicase complex, a hexameric ring of related MCM2-7 subunits stabilized by CDC45 and the tetrameric GINS complex. Associated with the replication-specific DNA polymerase alpha. Interacts with MCMBP. Interacts with ANKRD17. Interacts with MCM3AP; this interaction leads to MCM3 acetylation. In terms of processing, acetylated by MCM3AP. O-glycosylated (O-GlcNAcylated), in a cell cycle-dependent manner.

The protein resides in the nucleus. Its subcellular location is the chromosome. The enzyme catalyses ATP + H2O = ADP + phosphate + H(+). Functionally, acts as a component of the MCM2-7 complex (MCM complex) which is the replicative helicase essential for 'once per cell cycle' DNA replication initiation and elongation in eukaryotic cells. Core component of CDC45-MCM-GINS (CMG) helicase, the molecular machine that unwinds template DNA during replication, and around which the replisome is built. The active ATPase sites in the MCM2-7 ring are formed through the interaction surfaces of two neighboring subunits such that a critical structure of a conserved arginine finger motif is provided in trans relative to the ATP-binding site of the Walker A box of the adjacent subunit. The six ATPase active sites, however, are likely to contribute differentially to the complex helicase activity. Required for the entry in S phase and for cell division. This is DNA replication licensing factor MCM3 (Mcm3) from Mus musculus (Mouse).